The sequence spans 228 residues: Phosphoglycolate phosphatase (228 aa).

The active-site Nucleophile is the aspartate 12. Residues aspartate 12, aspartate 14, and aspartate 177 each contribute to the Mg(2+) site.

The protein belongs to the HAD-like hydrolase superfamily. CbbY/CbbZ/Gph/YieH family. Mg(2+) is required as a cofactor.

It catalyses the reaction 2-phosphoglycolate + H2O = glycolate + phosphate. It participates in organic acid metabolism; glycolate biosynthesis; glycolate from 2-phosphoglycolate: step 1/1. In terms of biological role, specifically catalyzes the dephosphorylation of 2-phosphoglycolate. Is involved in the dissimilation of the intracellular 2-phosphoglycolate formed during the DNA repair of 3'-phosphoglycolate ends, a major class of DNA lesions induced by oxidative stress. This chain is Phosphoglycolate phosphatase, found in Vibrio parahaemolyticus serotype O3:K6 (strain RIMD 2210633).